Consider the following 167-residue polypeptide: Large ribosomal subunit protein uL22 (167 aa).

The tract at residues 120–167 is disordered; it reads GSTATTVEDEAPKAKGAKGAKAKKAPAKKAAAKKAPAKKFAGKKTAKR. The span at 134 to 167 shows a compositional bias: basic residues; sequence KGAKGAKAKKAPAKKAAAKKAPAKKFAGKKTAKR.

This sequence belongs to the universal ribosomal protein uL22 family. As to quaternary structure, part of the 50S ribosomal subunit.

In terms of biological role, this protein binds specifically to 23S rRNA; its binding is stimulated by other ribosomal proteins, e.g. L4, L17, and L20. It is important during the early stages of 50S assembly. It makes multiple contacts with different domains of the 23S rRNA in the assembled 50S subunit and ribosome. The globular domain of the protein is located near the polypeptide exit tunnel on the outside of the subunit, while an extended beta-hairpin is found that lines the wall of the exit tunnel in the center of the 70S ribosome. The sequence is that of Large ribosomal subunit protein uL22 from Koribacter versatilis (strain Ellin345).